A 313-amino-acid chain; its full sequence is tRNA dimethylallyltransferase (313 aa).

9–16 (GPTATGKS) serves as a coordination point for ATP. Residue 11-16 (TATGKS) participates in substrate binding.

Belongs to the IPP transferase family. As to quaternary structure, monomer. Mg(2+) serves as cofactor.

It carries out the reaction adenosine(37) in tRNA + dimethylallyl diphosphate = N(6)-dimethylallyladenosine(37) in tRNA + diphosphate. Functionally, catalyzes the transfer of a dimethylallyl group onto the adenine at position 37 in tRNAs that read codons beginning with uridine, leading to the formation of N6-(dimethylallyl)adenosine (i(6)A). In Nocardia farcinica (strain IFM 10152), this protein is tRNA dimethylallyltransferase.